The following is a 298-amino-acid chain: Octopine catabolism/uptake operon regulatory protein OccR (298 aa).

Residues 1–58 (MNLRQVEAFRAVMLTGQMTAAAELMLVTQPAISRLIKDFEQATKLQLFERRGNHIIPT) form the HTH lysR-type domain. The segment at residues 18–37 (MTAAAELMLVTQPAISRLIK) is a DNA-binding region (H-T-H motif).

It belongs to the LysR transcriptional regulatory family.

Functionally, positive regulatory protein for the occ operon involved in octopine catabolism and uptake. Also acts as a negative regulator of its expression. This Agrobacterium tumefaciens (strain Ach5) protein is Octopine catabolism/uptake operon regulatory protein OccR (occR).